The sequence spans 760 residues: Heat shock transcription factor (760 aa).

Disordered regions lie at residues 1 to 132 (MIMN…PPVV) and 206 to 276 (FHPL…GPKT). 2 stretches are compositionally biased toward polar residues: residues 19-31 (TESN…SSPS) and 38-88 (RSGT…SNKL). The span at 119–130 (DYKDSIDLDKPP) shows a compositional bias: basic and acidic residues. Over residues 221–247 (AGPANNSQQQQQQQQQDSSIPSDGISS) the composition is skewed to low complexity. The DNA-binding element occupies 276 to 385 (TRPAFVMKIW…EDLLDKIVRN (110 aa)). The involved in trimerization stretch occupies residues 414-467 (ELETIKMNQYVISEDLRRVRQDNKMLWQENYLNRERNQVQGRTLDKILKFLSVV). Disordered regions lie at residues 492–545 (TQYR…NNNN), 560–582 (LTNR…EGSI), 609–630 (HQPG…SAPS), and 674–760 (QEQH…VSDH). Over residues 515-539 (NSRFARDNNQTAQPTYESPLSTSDT) the composition is skewed to polar residues. Residue serine 570 is modified to Phosphoserine. Phosphothreonine is present on threonine 574. Position 576 is a phosphoserine (serine 576). Threonine 577 is subject to Phosphothreonine. Low complexity predominate over residues 613 to 628 (ATTNNNNHSSSTAISA). Positions 646–684 (RNLDDLEKHINKEGQSIQQVQDWIDKLAQEQHEKQQQQQ) form a coiled coil. 2 stretches are compositionally biased toward polar residues: residues 701 to 722 (ATTT…NISF) and 731 to 742 (PGSNVSSNINDS). The segment covering 744 to 760 (GNEKKSKKRSIEEVSDH) has biased composition (basic and acidic residues).

It belongs to the HSF family. In terms of assembly, homotrimer. Homotrimerization increases the affinity of HSF1 to DNA. Interacts with HSP90. Post-translationally, activated by phosphorylation of at least Ser-570, Thr-574, Ser-576 and Thr-577 in response to heat shock. Additional unidentified residues are also phosphorylated in response to heat shock.

The protein resides in the nucleus. Functionally, DNA-binding transcription factor that specifically binds heat shock promoter elements (HSE) and activates transcription. With HSP90, is required for the modulation of the chaperone levels in response to growth temperature, rather than the activation of acute responses to sudden thermal transitions. Activated during infection and contributes to full virulence. This is Heat shock transcription factor from Candida albicans (strain SC5314 / ATCC MYA-2876) (Yeast).